The chain runs to 587 residues: Folylpolyglutamate synthase, mitochondrial (587 aa).

The N-terminal 42 residues, 1 to 42 (MSWARSRLCSTLSLAAVSARGATTEGAARRGMSAWPAPQEPG), are a transit peptide targeting the mitochondrion. Residue 106–109 (GKGS) coordinates ATP. Mg(2+) is bound by residues S130, E200, and H228. R363 and D377 together coordinate ATP. At S539 the chain carries Phosphoserine.

This sequence belongs to the folylpolyglutamate synthase family. In terms of assembly, monomer. Requires a monovalent cation as cofactor. In terms of tissue distribution, with non-specific probe, highest content in kidney and liver and lowest in spleen, lung and small intestine, and readily detectable in all of the tumors except hepatoma. Isoform 1 and isoform 2 expressed in leukemic cells and isoform 4 and isoform 5 in liver cells. Isoform 1 and isoform 2 exclusively expressed in hepatoma and Lewis lung carcinoma. Isoform 1 and isoform 2 also expressed in bone marrow, small intestine and spleen. Kidney expresses isoform 1, isoform 2, isoform 4 and isoform 5.

It is found in the mitochondrion inner membrane. It localises to the mitochondrion matrix. Its subcellular location is the cytoplasm. It carries out the reaction (6S)-5,6,7,8-tetrahydrofolyl-(gamma-L-Glu)(n) + L-glutamate + ATP = (6S)-5,6,7,8-tetrahydrofolyl-(gamma-L-Glu)(n+1) + ADP + phosphate + H(+). It participates in cofactor biosynthesis; tetrahydrofolylpolyglutamate biosynthesis. Inhibited by ammonium sulfate. Inhibited by pentaglutamate derivative of DDATHF, but isoform 2 is inhibited to a greater extent at lower concentrations of the compound that is isoform 5. Isoform 5 is virtually unaffected by H(4)PteGlu(5) and 5,10-CH(2)-H(4)PteGlu(5) at concentrations that substantially inhibits the activity of isoform 2. Isoform 2 and 5 are equally sensitive to polyglutamates of 10-CHO-H(4)-PteGlu. Catalyzes conversion of folates to polyglutamate derivatives allowing concentration of folate compounds in the cell and the intracellular retention of these cofactors, which are important substrates for most of the folate-dependent enzymes that are involved in one-carbon transfer reactions involved in purine, pyrimidine and amino acid synthesis. Dihydrofolate, tetrahydrofolate, 5,10-methylenetetrahydrofolate, 10-formyltetrahydrofolate and 5-formyltetrahydrofolate are the best substrates. Folic acid and 5-methyltetrahydrofolate can also act as substrates. This chain is Folylpolyglutamate synthase, mitochondrial (Fpgs), found in Mus musculus (Mouse).